The primary structure comprises 11103 residues: Colossin-A (11103 aa).

The signal sequence occupies residues 1 to 35 (MGTIKTKFKNNYLKNSYLFIIYIILFNLVIGIANS). N-linked (GlcNAc...) asparagine glycans are attached at residues N95, N120, N137, and N198. The Kelch 1 repeat unit spans residues 273–324 (NLFAVGNYVFFDVNRDGVHETTELFAPNVKVELYDAISSTRLIASTFTDLNG). In terms of domain architecture, CNA-B 1 spans 298-359 (APNVKVELYD…SNGPDNVINA (62 aa)). 3 N-linked (GlcNAc...) asparagine glycosylation sites follow: N372, N386, and N422. Positions 423 to 469 (LSGITVQLTTPSHVVLKTAQTDYAGNYVFDDLSEGVYSVHFILPENY) constitute a CNA-B 2 domain. N-linked (GlcNAc...) asparagine glycosylation is present at N493. 6 CNA-B domains span residues 551-599 (LPGV…PDGY), 676-745 (VANV…INLT), 803-871 (APFV…FTLN), 931-999 (AEGV…IDLS), 1057-1095 (LPNI…EGDY), and 1170-1231 (LSNT…FNSS). N678 carries N-linked (GlcNAc...) asparagine glycosylation. 3 N-linked (GlcNAc...) asparagine glycosylation sites follow: N1059, N1229, and N1239. The region spanning 1277–1314 (ISNIPLSLISQKTNQIISSVVTDSNGKYQFEDVPPGDY) is the CNA-B 9 domain. N-linked (GlcNAc...) asparagine glycosylation occurs at N1329. 8 CNA-B domains span residues 1391-1458 (SDVS…FKLT), 1494-1530 (LPGV…PGDY), 1602-1651 (LPGV…YKQV), 1708-1779 (LSDI…VTVK), 1824-1891 (SDVS…FKLT), 1927-1963 (LPGV…PGDY), 2035-2086 (LPGV…QVAQ), and 2141-2177 (VEGI…PGDY). A glycan (N-linked (GlcNAc...) asparagine) is linked at N1613. The segment at 1716–1740 (TDKDGNEISNTKSGPDGKYQFEDVP) is disordered. N-linked (GlcNAc...) asparagine glycosylation is found at N1759 and N1772. N2046 carries N-linked (GlcNAc...) asparagine glycosylation. N2192 and N2311 each carry an N-linked (GlcNAc...) asparagine glycan. 8 consecutive CNA-B domains span residues 2254–2321 (SDVS…FKLT), 2357–2402 (LPGV…TPIG), 2465–2514 (LPGV…YKQV), 2571–2640 (LSDI…NFVT), 2687–2754 (SDVS…FKLT), 2790–2835 (LPGV…TPIG), 2898–2947 (LPGV…YKQV), and 3004–3040 (LEGI…PGDY). N-linked (GlcNAc...) asparagine glycosylation occurs at N2476. The segment at 2580-2603 (DKDGNEITNTKSGPDGKYQFEDVP) is disordered. N2622 carries N-linked (GlcNAc...) asparagine glycosylation. 2 N-linked (GlcNAc...) asparagine glycosylation sites follow: N2801 and N2909. 3 N-linked (GlcNAc...) asparagine glycosylation sites follow: N3048, N3055, and N3118. CNA-B domains lie at 3117 to 3184 (SNVS…FKLT), 3220 to 3256 (LPGV…PGDY), 3328 to 3364 (LPGV…PGSY), and 3434 to 3470 (VEGI…PGDY). A glycan (N-linked (GlcNAc...) asparagine) is linked at N3339. N3485 carries N-linked (GlcNAc...) asparagine glycosylation. The Kelch 2 repeat unit spans residues 3503-3549 (SCFAVSGPLDNQNLGLSLFYEIGTMVWIDSNNNGKFEQPSDVLKSDV). CNA-B domains lie at 3547–3614 (SDVS…FKLT), 3650–3686 (LPGV…PGDY), and 3758–3809 (LPGV…QVAQ). N-linked (GlcNAc...) asparagine glycans are attached at residues N3769 and N3827. In terms of domain architecture, CNA-B 33 spans 3864-3900 (LSDITIRLTDKDGKVIQSTTSGPDGKYQFEDVPPGDY). N3915 carries N-linked (GlcNAc...) asparagine glycosylation. CNA-B domains follow at residues 3980 to 4047 (SDVS…FKLT), 4083 to 4128 (LPGV…TPIG), 4191 to 4240 (LPGV…YKQV), 4297 to 4378 (LSDI…NFVT), 4425 to 4492 (SDVS…FKLT), 4528 to 4573 (LPGV…TPIG), 4636 to 4685 (LPGV…YKQV), and 4742 to 4778 (VEGI…PGDY). N-linked (GlcNAc...) asparagine glycosylation is present at N4202. Residues 4286–4341 (NTGKQTDDSPPLSDITIRLTDKDGNEITKTKSRPDGNENSNTKSGPDGKYQFEDVP) are disordered. Basic and acidic residues predominate over residues 4304 to 4321 (LTDKDGNEITKTKSRPDG). N4360 carries an N-linked (GlcNAc...) asparagine glycan. A glycan (N-linked (GlcNAc...) asparagine) is linked at N4647. 2 N-linked (GlcNAc...) asparagine glycosylation sites follow: N4792 and N4918. 4 consecutive CNA-B domains span residues 4865–4928 (ITLT…FKLT), 4964–5009 (LPGV…TPIG), 5072–5123 (LPGV…QVAQ), and 5178–5214 (LEGI…PGDY). The N-linked (GlcNAc...) asparagine glycan is linked to N5083. Residues N5229, N5292, and N5348 are each glycosylated (N-linked (GlcNAc...) asparagine). Residues 5247 to 5293 (SCFAVSGPLDNQNLGLSPFYEIGTIVWIDSNNNDKFEQPSDIGKSNV) form a Kelch 3 repeat. CNA-B domains follow at residues 5291–5358 (SNVS…FKLT), 5394–5430 (LPGV…PGDY), 5502–5553 (LPGV…QVAQ), and 5608–5644 (LSDI…PGDY). N-linked (GlcNAc...) asparagine glycosylation is present at N5513. An N-linked (GlcNAc...) asparagine glycan is attached at N5659. 4 CNA-B domains span residues 5724–5791 (SDVS…FKLT), 5827–5872 (LPGV…TPIG), 5935–5984 (LPGV…YKQV), and 6041–6077 (VEGI…PGDY). A glycan (N-linked (GlcNAc...) asparagine) is linked at N5946. N-linked (GlcNAc...) asparagine glycans are attached at residues N6092 and N6155. CNA-B domains lie at 6154–6221 (SNVS…FKLT), 6257–6302 (LPGV…TPIG), 6365–6416 (LPGV…QDAQ), and 6471–6507 (LSDI…PGDY). N6376 carries an N-linked (GlcNAc...) asparagine glycan. Residues N6522 and N6535 are each glycosylated (N-linked (GlcNAc...) asparagine). 4 consecutive CNA-B domains span residues 6587 to 6654 (SDVS…FKLT), 6690 to 6726 (LEGV…PGDY), 6798 to 6849 (LPGV…QVNQ), and 6904 to 6940 (VEGI…PGDY). N-linked (GlcNAc...) asparagine glycans are attached at residues N6701, N6809, and N6848. N-linked (GlcNAc...) asparagine glycans are attached at residues N6954, N7080, N7137, and N7245. 8 CNA-B domains span residues 7023 to 7090 (SDVS…FKLT), 7126 to 7171 (LAGV…TPIG), 7234 to 7285 (LPGV…QDAQ), 7340 to 7411 (LSDI…VTVK), 7456 to 7523 (SDVS…FKLT), 7559 to 7596 (LPGV…PGDY), 7668 to 7719 (LTGV…QVAQ), and 7774 to 7810 (VEGI…PGDY). The segment at 7351–7372 (DGNEITNTKSGPDGKYQFEDVP) is disordered. 2 N-linked (GlcNAc...) asparagine glycosylation sites follow: N7391 and N7404. N7679 is a glycosylation site (N-linked (GlcNAc...) asparagine). N-linked (GlcNAc...) asparagine glycosylation is found at N7825 and N7837. CNA-B domains follow at residues 7887 to 7954 (SDVS…FKLT), 7990 to 8035 (LPGV…TPIG), 8098 to 8149 (LPGV…QVAQ), 8204 to 8265 (IPNI…FSLS), 8313 to 8374 (VGKS…VVDQ), 8420 to 8456 (LPGV…QGDY), and 8528 to 8587 (LPGI…PFDS). N-linked (GlcNAc...) asparagine glycosylation is found at N8109 and N8255. N8441, N8539, N8629, N8636, N8655, N8693, N8753, N8811, N8896, N8930, N8976, N9023, N9073, N9087, N9123, N9137, N9146, N9149, N9186, N9297, N9305, N9349, N9409, N9419, N9533, N9543, N9556, N9601, N9709, N9718, N9786, N9839, N9850, N9867, N9891, N9941, N9957, N9989, N10042, N10096, N10111, N10174, N10267, N10315, N10348, N10360, N10379, N10394, N10431, N10477, N10552, N10581, N10715, N10786, N10802, N10943, and N11018 each carry an N-linked (GlcNAc...) asparagine glycan. A Kelch 4 repeat occupies 8592–8638 (CFDLLDKSITNANLGLIPLYNIGSDAWLDNLNNGVRRNDSLLVPNVT). Residues 8634–8680 (VPNVTMSLYDNNGNLIETTITNSSGKYQFNDIQPGSYCVRATVPSNY) form the CNA-B 77 domain. Residues 8751-8810 (LPNVTVQLYDKVSGNILAATRSDDKGGYVVPNLLPSADYCVQFEVPPGYIVVVDSDDSVT) form the CNA-B 78 domain. Residues 8965-9014 (LPGVSVSLFSPNGTSIANTITDENGKYAFKDQVPGSYCIKMIIPPHYQQV) enclose the CNA-B 79 domain. A CNA-B 80 domain is found at 9071-9107 (VPNITMTLLDSQGKQINSTITNANGFYQFVDVAPGNY). One can recognise a CNA-B 81 domain in the interval 9185–9220 (ANVSLSLVNTGNSEIKTTTTNSQGKYSFGQLLAGNY). Positions 9299-9332 (TITLTPNNTALPTQTTTTDVNGNYRFDNLVVGNY) constitute a CNA-B 82 domain. CNA-B domains lie at 9407–9447 (LVNI…VVQF) and 9531–9569 (MANI…PGNY). In terms of domain architecture, CNA-B 85 spans 9659–9728 (VEGITVRIYD…ATGYISIDLS (70 aa)). In terms of domain architecture, CNA-B 86 spans 10044–10103 (TLFNADGSTPNDIFGKPIQMAVTDVNGKYSIPNVPPGSYYMTVSIPPRYIISNFTTTGLV). A CNA-B 87 domain is found at 10172 to 10236 (LPNVTVLLLN…ITPTKLVSTS (65 aa)). The region spanning 10313–10370 (PGNFTVQLKSANQAVNGGLTTVPIGTVVATSPVAANGSFSIPNLQLGNYTLTLIPPSG) is the CNA-B 88 domain.

It belongs to the serine-aspartate repeat-containing protein (SDr) family.

The protein resides in the secreted. The chain is Colossin-A (colA) from Dictyostelium discoideum (Social amoeba).